A 243-amino-acid chain; its full sequence is Small ribosomal subunit protein uS3 (243 aa).

The KH type-2 domain maps to 39-110; it reads IRTFIQKKYG…QVRINVVEVE (72 aa). The disordered stretch occupies residues 216 to 243; it reads KTIPVGASPKRKAGRRPQQFEDRSNENS. The segment covering 233–243 has biased composition (basic and acidic residues); it reads QQFEDRSNENS.

This sequence belongs to the universal ribosomal protein uS3 family. Part of the 30S ribosomal subunit. Forms a tight complex with proteins S10 and S14.

Its function is as follows. Binds the lower part of the 30S subunit head. Binds mRNA in the 70S ribosome, positioning it for translation. This Prochlorococcus marinus (strain MIT 9312) protein is Small ribosomal subunit protein uS3.